We begin with the raw amino-acid sequence, 82 residues long: RNA-binding protein BH0128 (82 aa).

It belongs to the eukaryotic ribosomal protein eL8 family.

The chain is RNA-binding protein BH0128 from Halalkalibacterium halodurans (strain ATCC BAA-125 / DSM 18197 / FERM 7344 / JCM 9153 / C-125) (Bacillus halodurans).